Here is a 464-residue protein sequence, read N- to C-terminus: Trigger factor (464 aa).

The PPIase FKBP-type domain occupies 169–256 (GDVAIVDYRG…MKELKAKELP (88 aa)).

Belongs to the FKBP-type PPIase family. Tig subfamily.

The protein resides in the cytoplasm. It carries out the reaction [protein]-peptidylproline (omega=180) = [protein]-peptidylproline (omega=0). Involved in protein export. Acts as a chaperone by maintaining the newly synthesized protein in an open conformation. Functions as a peptidyl-prolyl cis-trans isomerase. This Microcystis aeruginosa (strain NIES-843 / IAM M-2473) protein is Trigger factor.